Consider the following 358-residue polypeptide: Putative hydrogenase expression/formation protein MJ0993 (358 aa).

Residues cysteine 33, cysteine 61, and cysteine 64 each coordinate Fe cation.

It belongs to the HypD family.

The polypeptide is Putative hydrogenase expression/formation protein MJ0993 (Methanocaldococcus jannaschii (strain ATCC 43067 / DSM 2661 / JAL-1 / JCM 10045 / NBRC 100440) (Methanococcus jannaschii)).